Reading from the N-terminus, the 556-residue chain is DNA ligase (556 aa).

Glutamate 245 lines the ATP pocket. Catalysis depends on lysine 247, which acts as the N6-AMP-lysine intermediate. Residues arginine 252, arginine 267, glutamate 296, phenylalanine 336, arginine 408, and lysine 414 each contribute to the ATP site.

This sequence belongs to the ATP-dependent DNA ligase family. Mg(2+) is required as a cofactor.

The enzyme catalyses ATP + (deoxyribonucleotide)n-3'-hydroxyl + 5'-phospho-(deoxyribonucleotide)m = (deoxyribonucleotide)n+m + AMP + diphosphate.. DNA ligase that seals nicks in double-stranded DNA during DNA replication, DNA recombination and DNA repair. The protein is DNA ligase of Methanosphaerula palustris (strain ATCC BAA-1556 / DSM 19958 / E1-9c).